A 128-amino-acid chain; its full sequence is Large ribosomal subunit protein bL17 (128 aa).

Belongs to the bacterial ribosomal protein bL17 family. In terms of assembly, part of the 50S ribosomal subunit. Contacts protein L32.

The protein is Large ribosomal subunit protein bL17 of Pseudomonas syringae pv. tomato (strain ATCC BAA-871 / DC3000).